The chain runs to 1304 residues: Myosin-1 (1304 aa).

The span at M1–N12 shows a compositional bias: basic residues. The disordered stretch occupies residues M1 to K24. Residues V36–D730 enclose the Myosin motor domain. G129–T136 is an ATP binding site. S364 carries the phosphoserine modification. An actin-binding region spans residues S413–S496. 2 consecutive IQ domains span residues H734–A754 and A755–G780. One can recognise a TH1 domain in the interval R788–G978. Disordered stretches follow at residues D963 to A1162 and E1214 to W1304. Polar residues-rich tracts occupy residues S964–P983 and R1001–Q1012. Composition is skewed to low complexity over residues Q1029 to Q1052, Q1072 to Q1096, and P1120 to V1140. Pro residues predominate over residues A1141–K1156. Residues P1155–P1217 enclose the SH3 domain. 2 stretches are compositionally biased toward low complexity: residues P1217–K1227 and L1236–G1256. Positions D1292–W1304 are enriched in acidic residues.

This sequence belongs to the TRAFAC class myosin-kinesin ATPase superfamily. Myosin family. In terms of processing, phosphorylation of the TEDS site (Ser-364) is required for the polarization of the actin cytoskeleton. Phosphorylation probably activates the myosin-I ATPase activity.

It localises to the cytoplasm. Its subcellular location is the cytoskeleton. The protein localises to the actin patch. Type-I myosin implicated in the organization of the actin cytoskeleton. Required for proper actin cytoskeleton polarization. At the cell cortex, assembles in patch-like structures together with proteins from the actin-polymerizing machinery and promotes actin assembly. Functions as actin nucleation-promoting factor (NPF) for the Arp2/3 complex. This chain is Myosin-1 (MYO1), found in Debaryomyces hansenii (strain ATCC 36239 / CBS 767 / BCRC 21394 / JCM 1990 / NBRC 0083 / IGC 2968) (Yeast).